A 150-amino-acid polypeptide reads, in one-letter code: 3-hydroxyacyl-[acyl-carrier-protein] dehydratase FabZ (150 aa).

Histidine 54 is a catalytic residue.

Belongs to the thioester dehydratase family. FabZ subfamily.

It is found in the cytoplasm. The enzyme catalyses a (3R)-hydroxyacyl-[ACP] = a (2E)-enoyl-[ACP] + H2O. In terms of biological role, involved in unsaturated fatty acids biosynthesis. Catalyzes the dehydration of short chain beta-hydroxyacyl-ACPs and long chain saturated and unsaturated beta-hydroxyacyl-ACPs. The polypeptide is 3-hydroxyacyl-[acyl-carrier-protein] dehydratase FabZ (Psychromonas ingrahamii (strain DSM 17664 / CCUG 51855 / 37)).